The chain runs to 444 residues: Shufflon protein B' (444 aa).

A constant region region spans residues 1–361 (MKKYDRGWAS…TGAILSCQSG (361 aa)). The tract at residues 362–444 (TWRKVGSGEL…GSITVYAICQ (83 aa)) is variable region.

The polypeptide is Shufflon protein B' (Escherichia coli).